The sequence spans 702 residues: Ribosomal RNA large subunit methyltransferase K/L (702 aa).

In terms of domain architecture, THUMP spans 43-154; sequence LIYQSLMWSR…KETAHISLDL (112 aa).

The protein belongs to the methyltransferase superfamily. RlmKL family.

The protein localises to the cytoplasm. The catalysed reaction is guanosine(2445) in 23S rRNA + S-adenosyl-L-methionine = N(2)-methylguanosine(2445) in 23S rRNA + S-adenosyl-L-homocysteine + H(+). It carries out the reaction guanosine(2069) in 23S rRNA + S-adenosyl-L-methionine = N(2)-methylguanosine(2069) in 23S rRNA + S-adenosyl-L-homocysteine + H(+). Its function is as follows. Specifically methylates the guanine in position 2445 (m2G2445) and the guanine in position 2069 (m7G2069) of 23S rRNA. The sequence is that of Ribosomal RNA large subunit methyltransferase K/L from Enterobacter sp. (strain 638).